The following is a 243-amino-acid chain: Sec-independent protein translocase protein TatC (243 aa).

A run of 7 helical transmembrane segments spans residues 18 to 38 (VIII…NYVD), 70 to 90 (IAII…IWSF), 106 to 126 (MIPV…FTVF), 132 to 152 (FLLQ…KYIS), 153 to 173 (FALN…VVYI), 191 to 211 (YALL…DVIS), and 213 to 233 (LLMA…AKFI).

The protein belongs to the TatC family. Forms a complex with TatA.

It is found in the cell membrane. Its function is as follows. Part of the twin-arginine translocation (Tat) system that transports large folded proteins containing a characteristic twin-arginine motif in their signal peptide across membranes. This is Sec-independent protein translocase protein TatC from Carboxydothermus hydrogenoformans (strain ATCC BAA-161 / DSM 6008 / Z-2901).